We begin with the raw amino-acid sequence, 339 residues long: Ketol-acid reductoisomerase (NADP(+)) (339 aa).

Residues 1–182 form the KARI N-terminal Rossmann domain; sequence MRVYYDRDAD…GGGRAGIIET (182 aa). NADP(+) contacts are provided by residues 24–27, R48, S51, T53, and 83–86; these read YGSQ and DELQ. H108 is an active-site residue. Residue G134 coordinates NADP(+). One can recognise a KARI C-terminal knotted domain in the interval 183–328; it reads SFKEECETDL…AKLRDMMPWI (146 aa). Mg(2+)-binding residues include D191, E195, E227, and E231. Residue S252 participates in substrate binding.

Belongs to the ketol-acid reductoisomerase family. It depends on Mg(2+) as a cofactor.

The catalysed reaction is (2R)-2,3-dihydroxy-3-methylbutanoate + NADP(+) = (2S)-2-acetolactate + NADPH + H(+). It carries out the reaction (2R,3R)-2,3-dihydroxy-3-methylpentanoate + NADP(+) = (S)-2-ethyl-2-hydroxy-3-oxobutanoate + NADPH + H(+). It participates in amino-acid biosynthesis; L-isoleucine biosynthesis; L-isoleucine from 2-oxobutanoate: step 2/4. It functions in the pathway amino-acid biosynthesis; L-valine biosynthesis; L-valine from pyruvate: step 2/4. Functionally, involved in the biosynthesis of branched-chain amino acids (BCAA). Catalyzes an alkyl-migration followed by a ketol-acid reduction of (S)-2-acetolactate (S2AL) to yield (R)-2,3-dihydroxy-isovalerate. In the isomerase reaction, S2AL is rearranged via a Mg-dependent methyl migration to produce 3-hydroxy-3-methyl-2-ketobutyrate (HMKB). In the reductase reaction, this 2-ketoacid undergoes a metal-dependent reduction by NADPH to yield (R)-2,3-dihydroxy-isovalerate. The polypeptide is Ketol-acid reductoisomerase (NADP(+)) (Rhodopseudomonas palustris (strain HaA2)).